The sequence spans 648 residues: ATPase synthesis protein 25, mitochondrial (648 aa).

The N-terminal 29 residues, 1–29, are a transit peptide targeting the mitochondrion; sequence MANLLGYVGRRSAPYVVRRFIGANNYRYY.

This sequence belongs to the ATP25 family.

It is found in the mitochondrion inner membrane. Its function is as follows. Probable mitochondrial mRNA stabilization factor. The protein is ATPase synthesis protein 25, mitochondrial (ATP25) of Debaryomyces hansenii (strain ATCC 36239 / CBS 767 / BCRC 21394 / JCM 1990 / NBRC 0083 / IGC 2968) (Yeast).